Reading from the N-terminus, the 751-residue chain is Glutamate carboxypeptidase 2 (751 aa).

The Cytoplasmic segment spans residues 1 to 19 (MWNPLHETDSTSVAWRRPR). Ser10 carries the post-translational modification Phosphoserine. Residues 20–43 (WLCAGALVLAAGLFVLGFLFGWFI) traverse the membrane as a helical; Signal-anchor for type II membrane protein segment. Residues 44–750 (KSPNEAANIS…QAAAGTLREV (707 aa)) lie on the Extracellular side of the membrane. N-linked (GlcNAc...) asparagine glycosylation is found at Asn51, Asn77, Asn122, Asn141, Asn154, and Asn196. Positions 211 and 258 each coordinate substrate. Thr270 and Tyr273 together coordinate Ca(2+). Residues 275–588 (ANEYAYRLQI…QVRGGIVFEL (314 aa)) are NAALADase. Asn337 carries an N-linked (GlcNAc...) asparagine glycan. Zn(2+)-binding residues include His378 and Asp388. Substrate is bound at residue Glu425. The Nucleophile; for NAALADase activity role is filled by Glu425. Glu426 serves as a coordination point for Zn(2+). Ca(2+) is bound by residues Glu434 and Glu437. A Zn(2+)-binding site is contributed by Asp454. Residues Asn460 and Asn477 are each glycosylated (N-linked (GlcNAc...) asparagine). Substrate-binding positions include 518–519 (SG), Asn520, 535–537 (RAR), Tyr553, and 553–554 (YH). His554 is a Zn(2+) binding site. Residue Asn614 is glycosylated (N-linked (GlcNAc...) asparagine). Ser629 serves as the catalytic Charge relay system. N-linked (GlcNAc...) asparagine glycosylation is found at Asn639 and Asn646. Active-site charge relay system residues include Asp667 and His690. Substrate is bound at residue 700-701 (KY).

The protein belongs to the peptidase M28 family. M28B subfamily. As to quaternary structure, homodimer. The cofactor is Zn(2+). In terms of tissue distribution, high expression in the duodenum and in the jejunum brush-border membrane. Weak expression in kidney.

Its subcellular location is the cell membrane. It carries out the reaction Release of an unsubstituted, C-terminal glutamyl residue, typically from Ac-Asp-Glu or folylpoly-gamma-glutamates.. With respect to regulation, the NAALADase activity is inhibited by quisqualic acid, beta-NAAG and 2-(phosphonomethyl) pentanedioic acid (PMPA). Ethanol ingestion decreases the folate hydrolase activity by 50%. In terms of biological role, has both folate hydrolase and N-acetylated-alpha-linked-acidic dipeptidase (NAALADase) activity. Has a preference for tri-alpha-glutamate peptides. In the intestine, required for the uptake of folate. In the brain, modulates excitatory neurotransmission through the hydrolysis of the neuropeptide, N-aceylaspartylglutamate (NAAG), thereby releasing glutamate. Functionally, also exhibits a dipeptidyl-peptidase IV type activity. In vitro, cleaves Gly-Pro-AMC. This Sus scrofa (Pig) protein is Glutamate carboxypeptidase 2 (FOLH1).